Consider the following 462-residue polypeptide: Cytochrome b558/566 subunit A (462 aa).

Residues 1-8 (MSLKIKSK) are Cytoplasmic-facing. A helical membrane pass occupies residues 9 to 26 (ITIGVLLIIFLLSIIFTL). The Extracellular segment spans residues 27 to 431 (ENVSLAQTSP…TSTSPVTTIS (405 aa)). N-linked (GlcNAc...) asparagine glycans are attached at residues Asn-28, Asn-65, Asn-91, Asn-121, Asn-144, Asn-164, Asn-174, Asn-183, Asn-211, Asn-278, Asn-279, Asn-293, Asn-316, Asn-339, Asn-353, and Asn-376. A helical transmembrane segment spans residues 432-456 (SAIPPVTLYVTIIGVVVALVALVIL). Topologically, residues 457 to 462 (YVVFRR) are cytoplasmic.

The cofactor is heme. N-glycosylated on at least seven Asn residues by identical hexasaccharide units composed of Man, GlcNAc, Glc and 6-deoxy-6-sulfoglucose residues in the molar ration of 2:2:1:1. Post-translationally, O-glycosylated on probably as many as 35 positions by single Man residues.

It localises to the cell membrane. Its function is as follows. Monoheme cytochrome whose physiological function is not yet clear. The polypeptide is Cytochrome b558/566 subunit A (cbsA) (Sulfolobus acidocaldarius (strain ATCC 33909 / DSM 639 / JCM 8929 / NBRC 15157 / NCIMB 11770)).